A 456-amino-acid polypeptide reads, in one-letter code: UDP-N-acetylglucosamine 1-carboxyvinyltransferase (456 aa).

34–35 (KN) contacts phosphoenolpyruvate. R104 serves as a coordination point for UDP-N-acetyl-alpha-D-glucosamine. The Proton donor role is filled by C128. C128 carries the post-translational modification 2-(S-cysteinyl)pyruvic acid O-phosphothioketal. UDP-N-acetyl-alpha-D-glucosamine contacts are provided by D319 and I341.

The protein belongs to the EPSP synthase family. MurA subfamily.

Its subcellular location is the cytoplasm. The catalysed reaction is phosphoenolpyruvate + UDP-N-acetyl-alpha-D-glucosamine = UDP-N-acetyl-3-O-(1-carboxyvinyl)-alpha-D-glucosamine + phosphate. It functions in the pathway cell wall biogenesis; peptidoglycan biosynthesis. Cell wall formation. Adds enolpyruvyl to UDP-N-acetylglucosamine. The chain is UDP-N-acetylglucosamine 1-carboxyvinyltransferase from Prochlorococcus marinus (strain MIT 9312).